Consider the following 657-residue polypeptide: ER degradation-enhancing alpha-mannosidase-like protein 1 (657 aa).

The Cytoplasmic portion of the chain corresponds to 1–4; the sequence is MQWR. Residues 5–25 form a helical; Signal-anchor for type II membrane protein membrane-spanning segment; that stretch reads ALVLGLVLLRLGLHGVLWLVF. The Lumenal portion of the chain corresponds to 26-657; the sequence is GLGPSMGFYQ…RQIDQMVGLI (632 aa). The disordered stretch occupies residues 48–94; it reads SPDGPASPTSGPVGRPGGVSGPSWLQPPGTGAAQSPRKAPRRPGPGM. N-linked (GlcNAc...) asparagine glycans are attached at residues asparagine 181, asparagine 198, asparagine 299, asparagine 342, and asparagine 624.

Belongs to the glycosyl hydrolase 47 family. In terms of assembly, interacts with DNAJC10. Interacts with DERL2 and DERL3. Binds to SEL1L.

It localises to the endoplasmic reticulum membrane. Extracts misfolded glycoproteins, but not glycoproteins undergoing productive folding, from the calnexin cycle. It is directly involved in endoplasmic reticulum-associated degradation (ERAD) and targets misfolded glycoproteins for degradation in an N-glycan-independent manner, probably by forming a complex with SEL1L. It has low mannosidase activity, catalyzing mannose trimming from Man8GlcNAc2 to Man7GlcNAc2. This Homo sapiens (Human) protein is ER degradation-enhancing alpha-mannosidase-like protein 1 (EDEM1).